Consider the following 359-residue polypeptide: MDPNKFREKEISKKEALELFEDNEIIFELFKFADSLRREEVGDIVTYVVNRNINFTNICVGNCRFCAFRANENDKHAYFLDIDEIAKRAVEAKKFGCTEVCIQGGLHPKIDTYYQAEILKAVHEATKPYGDIHIHAFSPMEVYFGAENAGLDIKEALKILKENGLNSMPGTAAEILDDDIRAELCPNKIKTKEWIYIIKEAHKLGIPTTATMMYGHIEEYKHWVNHLFIIKEIQEETNGFTEFVPLSFMHKYAPIYKEGKAKAGATGIEDLKVFAVSRIIFKGLIKNIQASWVKLGKKMVQVALRCGANDVGGTLIEESISRSAGAEHGVYMSVEEIRDMIKRVGLIPKERTTLYKILE.

Residues 45-278 (VTYVVNRNIN…EDLKVFAVSR (234 aa)) enclose the Radical SAM core domain. The [4Fe-4S] cluster site is built by Cys-59, Cys-63, and Cys-66.

The protein belongs to the radical SAM superfamily. CofH family. As to quaternary structure, consists of two subunits, CofG and CofH. It depends on [4Fe-4S] cluster as a cofactor.

The enzyme catalyses 5-amino-6-(D-ribitylamino)uracil + L-tyrosine + S-adenosyl-L-methionine = 5-amino-5-(4-hydroxybenzyl)-6-(D-ribitylimino)-5,6-dihydrouracil + 2-iminoacetate + 5'-deoxyadenosine + L-methionine + H(+). It functions in the pathway cofactor biosynthesis; coenzyme F0 biosynthesis. In terms of biological role, catalyzes the radical-mediated synthesis of 5-amino-5-(4-hydroxybenzyl)-6-(D-ribitylimino)-5,6-dihydrouracil from 5-amino-6-(D-ribitylamino)uracil and L-tyrosine. In Methanocaldococcus jannaschii (strain ATCC 43067 / DSM 2661 / JAL-1 / JCM 10045 / NBRC 100440) (Methanococcus jannaschii), this protein is 5-amino-6-(D-ribitylamino)uracil--L-tyrosine 4-hydroxyphenyl transferase (cofH).